A 422-amino-acid polypeptide reads, in one-letter code: G-protein coupled receptor 83 (422 aa).

Residues 1–17 (MNVPPVLLLFLLSSVRA) form the signal peptide. Residues 18–70 (TEQPQVVTEHPSMDAALTGANASHFWANYTFSDWQNFVGRRRYGAESQNPTVK) are Extracellular-facing. Residues 71-91 (ALLIVAYSFIIVFSLFGNVLV) form a helical membrane-spanning segment. At 92–106 (CHVIFKNQRMHSATS) the chain is on the cytoplasmic side. A helical membrane pass occupies residues 107-127 (LFIVNLAVADIMITLLNTPFT). Topologically, residues 128-143 (LVRFVNSTWVFGKGMC) are extracellular. Cysteines 143 and 223 form a disulfide. A helical membrane pass occupies residues 144–166 (HVSRFAQYCSLHVSALTLTAIAV). Residues 167 to 184 (DRHQVIMHPLKPRISITK) are Cytoplasmic-facing. A helical membrane pass occupies residues 185-205 (GVIYIAVIWVMATFFSLPHAI). Residues 206-236 (CQKLFTFKYSEDIVRSLCLPDFPEPADLFWK) lie on the Extracellular side of the membrane. Residues 237–257 (YLDLATFILLYLLPLFIISVA) traverse the membrane as a helical segment. The Cytoplasmic segment spans residues 258–292 (YARVAKKLWLCNTIGDVTTEQYLALRRKKKTTVKM). Residues 293–313 (LVLVVVLFALCWFPLNCYVLL) form a helical membrane-spanning segment. The Extracellular portion of the chain corresponds to 314–326 (LSSKAIHTNNALY). Residues 327-347 (FAFHWFAMSSTCYNPFIYCWL) form a helical membrane-spanning segment. Topologically, residues 348–422 (NENFRVELKA…SSVEPTVAVS (75 aa)) are cytoplasmic. The tract at residues 401 to 422 (PSSQIQSGKTDLSSVEPTVAVS) is disordered.

The protein belongs to the G-protein coupled receptor 1 family. As to expression, expressed preferentially in brain, and its neuronal expression is relegated to limbic brain regions, particularly in forebrain.

It localises to the cell membrane. Its function is as follows. G-protein coupled receptor for PEN, a neuropeptide produced from the precursor protein, proSAAS (encoded by PCSK1N). Acts through a G(i)- and G(q)-alpha-alpha-mediated pathway in response to PEN. Plays a role in food intake and body weight regulation. May contribute to the regulation of anxiety-related behaviors. In Rattus norvegicus (Rat), this protein is G-protein coupled receptor 83.